The chain runs to 137 residues: Peptide methionine sulfoxide reductase MsrB (137 aa).

The region spanning 7-129 is the MsrB domain; sequence AEELKKNLSE…NSASLRFTDG (123 aa). Zn(2+) contacts are provided by cysteine 46, cysteine 49, cysteine 95, and cysteine 98. The active-site Nucleophile is the cysteine 118.

It belongs to the MsrB Met sulfoxide reductase family. Zn(2+) is required as a cofactor.

The catalysed reaction is L-methionyl-[protein] + [thioredoxin]-disulfide + H2O = L-methionyl-(R)-S-oxide-[protein] + [thioredoxin]-dithiol. The chain is Peptide methionine sulfoxide reductase MsrB from Escherichia coli O45:K1 (strain S88 / ExPEC).